Here is a 779-residue protein sequence, read N- to C-terminus: Phosphoribosylformylglycinamidine synthase subunit PurL (779 aa).

Histidine 52 is an active-site residue. 2 residues coordinate ATP: tyrosine 55 and lysine 94. Glutamate 96 contacts Mg(2+). Substrate is bound by residues 97 to 100 (SHNH) and arginine 119. Residue histidine 98 is the Proton acceptor of the active site. Aspartate 120 contacts Mg(2+). Residue glutamine 243 coordinates substrate. Residue aspartate 271 coordinates Mg(2+). Residue 315–317 (ESQ) participates in substrate binding. Positions 523 and 560 each coordinate ATP. Asparagine 561 is a binding site for Mg(2+). Serine 563 serves as a coordination point for substrate.

This sequence belongs to the FGAMS family. As to quaternary structure, monomer. Part of the FGAM synthase complex composed of 1 PurL, 1 PurQ and 2 PurS subunits.

It is found in the cytoplasm. The catalysed reaction is N(2)-formyl-N(1)-(5-phospho-beta-D-ribosyl)glycinamide + L-glutamine + ATP + H2O = 2-formamido-N(1)-(5-O-phospho-beta-D-ribosyl)acetamidine + L-glutamate + ADP + phosphate + H(+). It participates in purine metabolism; IMP biosynthesis via de novo pathway; 5-amino-1-(5-phospho-D-ribosyl)imidazole from N(2)-formyl-N(1)-(5-phospho-D-ribosyl)glycinamide: step 1/2. Functionally, part of the phosphoribosylformylglycinamidine synthase complex involved in the purines biosynthetic pathway. Catalyzes the ATP-dependent conversion of formylglycinamide ribonucleotide (FGAR) and glutamine to yield formylglycinamidine ribonucleotide (FGAM) and glutamate. The FGAM synthase complex is composed of three subunits. PurQ produces an ammonia molecule by converting glutamine to glutamate. PurL transfers the ammonia molecule to FGAR to form FGAM in an ATP-dependent manner. PurS interacts with PurQ and PurL and is thought to assist in the transfer of the ammonia molecule from PurQ to PurL. The chain is Phosphoribosylformylglycinamidine synthase subunit PurL from Prochlorococcus marinus (strain MIT 9312).